The following is a 380-amino-acid chain: Queuine tRNA-ribosyltransferase (380 aa).

Catalysis depends on Asp96, which acts as the Proton acceptor. Substrate contacts are provided by residues 96-100 (DSGGF), Asp150, Gln193, and Gly220. Residues 251-257 (GVGAPDS) form an RNA binding region. Asp270 (nucleophile) is an active-site residue. Positions 275 to 279 (TRIAR) are RNA binding; important for wobble base 34 recognition. 4 residues coordinate Zn(2+): Cys308, Cys310, Cys313, and His339.

The protein belongs to the queuine tRNA-ribosyltransferase family. In terms of assembly, homodimer. Within each dimer, one monomer is responsible for RNA recognition and catalysis, while the other monomer binds to the replacement base PreQ1. It depends on Zn(2+) as a cofactor.

The enzyme catalyses 7-aminomethyl-7-carbaguanine + guanosine(34) in tRNA = 7-aminomethyl-7-carbaguanosine(34) in tRNA + guanine. It functions in the pathway tRNA modification; tRNA-queuosine biosynthesis. Its function is as follows. Catalyzes the base-exchange of a guanine (G) residue with the queuine precursor 7-aminomethyl-7-deazaguanine (PreQ1) at position 34 (anticodon wobble position) in tRNAs with GU(N) anticodons (tRNA-Asp, -Asn, -His and -Tyr). Catalysis occurs through a double-displacement mechanism. The nucleophile active site attacks the C1' of nucleotide 34 to detach the guanine base from the RNA, forming a covalent enzyme-RNA intermediate. The proton acceptor active site deprotonates the incoming PreQ1, allowing a nucleophilic attack on the C1' of the ribose to form the product. After dissociation, two additional enzymatic reactions on the tRNA convert PreQ1 to queuine (Q), resulting in the hypermodified nucleoside queuosine (7-(((4,5-cis-dihydroxy-2-cyclopenten-1-yl)amino)methyl)-7-deazaguanosine). The sequence is that of Queuine tRNA-ribosyltransferase from Streptococcus thermophilus (strain ATCC BAA-491 / LMD-9).